The primary structure comprises 253 residues: Fatty acid elongase 5 (253 aa).

The next 7 helical transmembrane spans lie at 24-44, 60-80, 100-120, 127-147, 150-170, 188-208, and 214-234; these read IFVS…LVII, IMMI…ISLA, FWIF…VLMI, QLSF…GLLL, GIGN…HFLM, ILTK…SLAP, and FALQ…ILFL. The HxxHH motif motif lies at 132 to 136; it reads HIYHH. H135 functions as the Nucleophile in the catalytic mechanism.

The protein belongs to the ELO family.

The protein localises to the membrane. It carries out the reaction an acyl-CoA + malonyl-CoA + H(+) = a 3-oxoacyl-CoA + CO2 + CoA. It participates in lipid metabolism; polyunsaturated fatty acid biosynthesis. Its function is as follows. Involved in the synthesis of fatty acids. Elongates C20 polyunsaturated fatty acids (PUFAs) with a preference for n-6 PUFAs. The polypeptide is Fatty acid elongase 5 (Trypanosoma cruzi (strain CL Brener)).